The sequence spans 796 residues: Ent-copalyl diphosphate synthase 4 (796 aa).

A chloroplast-targeting transit peptide spans 1-23; it reads MSSSSIVTSLLRPTTAADGVLPR. Lys-240 contributes to the substrate binding site. Mg(2+) is bound by residues Asp-371 and Asp-373. The DXDD motif signature appears at 371–374; it reads DVDD. Lys-457 lines the substrate pocket.

Belongs to the terpene synthase family. Tpsc subfamily. Mg(2+) is required as a cofactor. In terms of tissue distribution, highly expressed in leaves, and, at low levels, in stems, but barely in roots and flowers.

The protein localises to the plastid. It localises to the chloroplast. It catalyses the reaction (2E,6E,10E)-geranylgeranyl diphosphate = ent-copalyl diphosphate. Its pathway is secondary metabolite biosynthesis; terpenoid biosynthesis. Its function is as follows. Involved in the biosynthesis of ent-kaurene diterpenoids natural products such as oridonin, miltiradiene, eriocalyxin B and nezukol, known to exhibit antitumor, anti-inflammatory and antibacterial activities. Catalyzes the conversion of (2E,6E,10E)-geranylgeranyl diphosphate (GGPP) to ent-copalyl diphosphate (ent-CPP). The chain is Ent-copalyl diphosphate synthase 4 from Isodon rubescens (Rabdosia rubescens).